Consider the following 254-residue polypeptide: Dihydroorotate dehydrogenase B (NAD(+)), electron transfer subunit (254 aa).

Residues 1-99 (MLQTEMKVIQ…LGPLGKGFDI (99 aa)) enclose the FAD-binding FR-type domain. FAD is bound by residues 50–53 (RPIS), 67–69 (LYR), and 74–75 (GT). [2Fe-2S] cluster is bound by residues Cys-218, Cys-223, Cys-226, and Cys-241.

Belongs to the PyrK family. As to quaternary structure, heterotetramer of 2 PyrK and 2 PyrD type B subunits. [2Fe-2S] cluster is required as a cofactor. Requires FAD as cofactor.

It functions in the pathway pyrimidine metabolism; UMP biosynthesis via de novo pathway; orotate from (S)-dihydroorotate (NAD(+) route): step 1/1. Responsible for channeling the electrons from the oxidation of dihydroorotate from the FMN redox center in the PyrD type B subunit to the ultimate electron acceptor NAD(+). The polypeptide is Dihydroorotate dehydrogenase B (NAD(+)), electron transfer subunit (Listeria monocytogenes serovar 1/2a (strain ATCC BAA-679 / EGD-e)).